The primary structure comprises 156 residues: uncharacterized protein (156 aa).

It to L.lactis TrpF C-terminal region.

This is an uncharacterized protein from Bacillus subtilis (strain 168).